A 66-amino-acid chain; its full sequence is Large ribosomal subunit protein bL33 (66 aa).

Belongs to the bacterial ribosomal protein bL33 family.

In Wolbachia pipientis subsp. Culex pipiens (strain wPip), this protein is Large ribosomal subunit protein bL33.